The primary structure comprises 873 residues: Leucine--tRNA ligase (873 aa).

The 'HIGH' region motif lies at 42 to 52; that stretch reads PYPSGKLHMGH. Positions 624 to 643 are disordered; it reads PVEIGGTEKMSKSKNNGVDP. The short motif at 632 to 636 is the 'KMSKS' region element; that stretch reads KMSKS. K635 contributes to the ATP binding site.

This sequence belongs to the class-I aminoacyl-tRNA synthetase family.

Its subcellular location is the cytoplasm. The enzyme catalyses tRNA(Leu) + L-leucine + ATP = L-leucyl-tRNA(Leu) + AMP + diphosphate. The protein is Leucine--tRNA ligase of Pseudomonas aeruginosa (strain LESB58).